An 865-amino-acid polypeptide reads, in one-letter code: MEGIHHGGHGGARPSQSMAFPGFDADSHMMSDDFTFDSPFSSSGSSNANDGVLGNSIFPEWTNGAPRGESPDEMQRKDPLAAQIWKLYTRTKSQLPNQERMENLTWRMMAMNLKRKEREQQEREQQARASETVSPAPSGIEMRISDQVSSAGPDLSHDMNLDGTSDAMNLDDFIIPFDSPAEHPSHPSADRQFTATPTGSIPIKSRKDAMMEQSTAASFPRAPQDQRTNSEFGYVARRVRKTSVDERQFFAGLSVPTRKRPAEASPQVPPVSNAIVAALGIVSGLPDYSLDHPPSAFALPGNGTVGPRRPQHHHTHSNIPYGLDTYGLNEDHGINSAGPYQQNFHFSPSESPMTAGNPFSRLYTQTPLASSLNSTEFFSPPPSGYQSTVSTPQPIYEGEQSIFFSDAPSAESHSQRRIPNYIQQRQSNLSASLQPRYMYNMNGDSHQGNAVTGPPTTHVSGFSVPQPQHVNPAQVLGHGEFSTTAPATSMFTFGGDSDNEDDDGNFERGRMTMPNDFASMDESGDMSAGLHWDGGFPGSVQSLPGFSAQHRKHVTIGSTDMMDGPPEWNQGGTLGRGHGSVASVSDVRNQNQDPRRYGKVPRTASTPNAAALLRQSLNGSASGPPTNHPSPSTPPESGLSSAVPSRPGSPGGSKNGDPNAGPTTCTNCFTQTTPLWRRNPEGQPLCNACGLFLKLHGVVRPLSLKTDVIKKRNRSSANTLAVGTSRSSKKSSRKNSIQHAPSTSISSRINTSESPPSMTGSNTLGKPGVVPIAAAPPKSGPPAGVAQGRAGVQVAPRRQRRLEKAPIGSDQDPDDSPKSAAPTSRSKVVPLAPAMAPPAAANPANHSIAGGQGASQEWEWLTMSL.

Disordered stretches follow at residues 1–75 (MEGI…DEMQ), 115–140 (RKEREQQEREQQARASETVSPAPSGI), 177–227 (FDSP…QDQR), 557–605 (GSTD…RTAS), and 617–663 (LNGS…AGPT). Positions 32 to 46 (DDFTFDSPFSSSGSS) are enriched in low complexity. 2 stretches are compositionally biased toward basic and acidic residues: residues 115-126 (RKEREQQEREQQ) and 180-189 (PAEHPSHPSA). Over residues 582–592 (ASVSDVRNQNQ) the composition is skewed to polar residues. The GATA-type zinc finger occupies 665 to 689 (CTNCFTQTTPLWRRNPEGQPLCNAC). The tract at residues 713 to 854 (NRSSANTLAV…NHSIAGGQGA (142 aa)) is disordered. Composition is skewed to polar residues over residues 715–724 (SSANTLAVGT) and 737–764 (IQHAPSTSISSRINTSESPPSMTGSNTL). Low complexity-rich tracts occupy residues 771–786 (PIAAAPPKSGPPAGVA) and 830–844 (PLAPAMAPPAAANPA).

Its subcellular location is the nucleus. Its function is as follows. Major nitrogen regulatory protein. This chain is Nitrogen regulatory protein nrfA (nrfA), found in Penicillium urticae.